The sequence spans 134 residues: ATP synthase epsilon chain, chloroplastic (134 aa).

This sequence belongs to the ATPase epsilon chain family. F-type ATPases have 2 components, CF(1) - the catalytic core - and CF(0) - the membrane proton channel. CF(1) has five subunits: alpha(3), beta(3), gamma(1), delta(1), epsilon(1). CF(0) has three main subunits: a, b and c.

The protein localises to the plastid. The protein resides in the chloroplast thylakoid membrane. Produces ATP from ADP in the presence of a proton gradient across the membrane. The polypeptide is ATP synthase epsilon chain, chloroplastic (Gracilaria tenuistipitata var. liui (Red alga)).